The primary structure comprises 130 residues: Small ribosomal subunit protein uS9 (130 aa).

The protein belongs to the universal ribosomal protein uS9 family.

The polypeptide is Small ribosomal subunit protein uS9 (Bordetella pertussis (strain Tohama I / ATCC BAA-589 / NCTC 13251)).